The following is a 325-amino-acid chain: NADH-quinone oxidoreductase subunit H (325 aa).

A run of 8 helical transmembrane segments spans residues 11–31 (ILLTILKAVVILLVVVTCGAF), 81–101 (VIFTLAPMIAFTSLLLAFAIV), 114–134 (IGILFFLMMAGLAVYAVLFAG), 154–174 (LSYEVFLGLSLMGVVAQAGSF), 186–206 (VWNVIPQFFGFITFAIAGVAV), 237–257 (FFVGEYIGIVTISALMVTLFF), 265–285 (LPPFIWFALKTAFFMMMFILI), and 304–324 (ICLPLTLINLLVTAAVILWQA).

This sequence belongs to the complex I subunit 1 family. In terms of assembly, NDH-1 is composed of 13 different subunits. Subunits NuoA, H, J, K, L, M, N constitute the membrane sector of the complex.

The protein localises to the cell inner membrane. It catalyses the reaction a quinone + NADH + 5 H(+)(in) = a quinol + NAD(+) + 4 H(+)(out). Its function is as follows. NDH-1 shuttles electrons from NADH, via FMN and iron-sulfur (Fe-S) centers, to quinones in the respiratory chain. The immediate electron acceptor for the enzyme in this species is believed to be ubiquinone. Couples the redox reaction to proton translocation (for every two electrons transferred, four hydrogen ions are translocated across the cytoplasmic membrane), and thus conserves the redox energy in a proton gradient. This subunit may bind ubiquinone. This Escherichia coli O7:K1 (strain IAI39 / ExPEC) protein is NADH-quinone oxidoreductase subunit H.